Here is a 195-residue protein sequence, read N- to C-terminus: SAGA-associated factor 11 homolog (195 aa).

The interval 1–22 (MSAANMPTTTGAQGSGNQVPRT) is disordered. Residues 105 to 126 (CTCPNCDRLVAAARFAPHLEKC) form an SGF11-type zinc finger. Positions 140–195 (RLATKEGATSAHLHSSGNTGGTDDEDDVDWSSDKRRKKSNQNSRNNGSKKNNGKTF) are disordered. The residue at position 171 (serine 171) is a Phosphoserine. Positions 179 to 195 (NQNSRNNGSKKNNGKTF) are enriched in low complexity.

It belongs to the SGF11 family. Component of some SAGA transcription coactivator-HAT complexes, at least composed of Ada2b, not/nonstop, Pcaf/Gcn5, Sgf11 and Spt3. Within the SAGA complex, Sgf11, e(y)2, and not/nonstop form an additional subcomplex of SAGA called the DUB module (deubiquitination module). Interacts directly with not/nonstop. Interacts with the AMEX complex component xmas-2. Interacts with Cbp80; important for promoter recruitment of Sgf11 that is not associated with the DUB module.

It is found in the nucleus. It localises to the nucleoplasm. Its subcellular location is the cytoplasm. In terms of biological role, component of the transcription regulatory histone acetylation (HAT) complex SAGA, a multiprotein complex that activates transcription by remodeling chromatin and mediating histone acetylation and deubiquitination. Within the SAGA complex, participates in a subcomplex that specifically deubiquitinates histone H2B. The SAGA complex is recruited to specific gene promoters by activators, where it is required for transcription. Required for nuclear receptor-mediated transactivation. Binds independently on SAGA to promoters in an RNA-dependent manner. Binds to mRNA and is essential for total mRNA export from the nucleus. Required to counteract heterochromatin silencing. Controls the development of neuronal connectivity in visual system by being required for accurate axon targeting in the optic lobe. Required for expression of ecdysone-induced genes such as br/broad. This chain is SAGA-associated factor 11 homolog, found in Drosophila sechellia (Fruit fly).